The sequence spans 343 residues: MSNAMAASAVPDDTAYPRLLADVGGTNVRFALETAPMQIGAVTALKVADHPSLEAAMRHYRDALSASGAKLPRHAAIGLANPVTGDHVRLTNHDWAFSIEATRQALGLQTLVAINDFTSLALGLPYLGANDLVQIRSGQAVATAPRALIGPGTGLGVSGLVPAPGGGAVALAGEGGHIELMPVTDDEWIAWRATHASLGRVSAERLLSGMGLSQIHAALSAETGTRVDVPLTPEQVTTGAFARHDPLCERTMAVFFGLLGSVAADIALVMGALGGVYLGGGILPRFVPALQASAFNARFVAKGRMRGYLDKLPVYVITASYPALPGLARALADTLSHGRPHIG.

21-26 (ADVGGT) lines the ATP pocket.

The protein belongs to the bacterial glucokinase family.

It is found in the cytoplasm. It carries out the reaction D-glucose + ATP = D-glucose 6-phosphate + ADP + H(+). This is Glucokinase from Cupriavidus pinatubonensis (strain JMP 134 / LMG 1197) (Cupriavidus necator (strain JMP 134)).